We begin with the raw amino-acid sequence, 514 residues long: Putative transposase y4uI (514 aa).

Residues 11–93 (VREILKLRLD…PDWSAVAREL (83 aa)) enclose the HTH IS408-type domain. An Integrase catalytic domain is found at 128-317 (HGRLPLVMRQ…TRRALFDELD (190 aa)).

It belongs to the transposase IS21/IS408/IS1162 family.

The chain is Putative transposase y4uI from Sinorhizobium fredii (strain NBRC 101917 / NGR234).